The primary structure comprises 30 residues: Cysteine-rich venom protein mossambin (30 aa).

The disordered stretch occupies residues 1-30 (NVDFNSESTRRKKKQNEIVDLHNSLRRTVN).

The protein belongs to the CRISP family. Contains 8 disulfide bonds. Expressed by the venom gland.

The protein localises to the secreted. In terms of biological role, inhibits calcium-activated potassium channels (KCa), voltage-gated potassium channel (Kv), and the calcium release channel/ryanodine receptor (RyR). The chain is Cysteine-rich venom protein mossambin from Naja mossambica (Mozambique spitting cobra).